The chain runs to 183 residues: Calmodulin-like protein 3 (183 aa).

EF-hand domains follow at residues 7–42, 43–78, 80–115, and 116–151; these read EQIA…LGQS, PTEA…KLRD, GAED…LSDP, and LSDD…KRRQ. Asp20, Asp22, Asp24, Thr26, Glu31, Asp56, Asp58, Ser60, Ser62, Glu67, Asp93, Asp95, Asn97, Glu104, Asp129, Asp131, Asp133, Gln135, and Glu140 together coordinate Ca(2+). Positions 154–183 are disordered; the sequence is MEGHGSGGHRSSNSHKKSGCCGPNSSCTIL. Residues Cys173 and Cys174 are each lipidated (S-palmitoyl cysteine). Cys180 bears the Cysteine methyl ester mark. Residue Cys180 is the site of S-farnesyl cysteine attachment. A propeptide spans 181 to 183 (removed in mature form); sequence TIL.

This sequence belongs to the calmodulin family.

It is found in the membrane. Functionally, potential calcium sensor. The polypeptide is Calmodulin-like protein 3 (CML3) (Oryza sativa subsp. japonica (Rice)).